The following is an 83-amino-acid chain: Cell division topological specificity factor (83 aa).

It belongs to the MinE family.

Its function is as follows. Prevents the cell division inhibition by proteins MinC and MinD at internal division sites while permitting inhibition at polar sites. This ensures cell division at the proper site by restricting the formation of a division septum at the midpoint of the long axis of the cell. The protein is Cell division topological specificity factor of Deinococcus deserti (strain DSM 17065 / CIP 109153 / LMG 22923 / VCD115).